Reading from the N-terminus, the 366-residue chain is tRNA/tmRNA (uracil-C(5))-methyltransferase (366 aa).

Positions 190, 218, 223, 239, and 299 each coordinate S-adenosyl-L-methionine. Catalysis depends on Cys324, which acts as the Nucleophile. Catalysis depends on Glu358, which acts as the Proton acceptor.

The protein belongs to the class I-like SAM-binding methyltransferase superfamily. RNA M5U methyltransferase family. TrmA subfamily.

The enzyme catalyses uridine(54) in tRNA + S-adenosyl-L-methionine = 5-methyluridine(54) in tRNA + S-adenosyl-L-homocysteine + H(+). The catalysed reaction is uridine(341) in tmRNA + S-adenosyl-L-methionine = 5-methyluridine(341) in tmRNA + S-adenosyl-L-homocysteine + H(+). Dual-specificity methyltransferase that catalyzes the formation of 5-methyluridine at position 54 (m5U54) in all tRNAs, and that of position 341 (m5U341) in tmRNA (transfer-mRNA). This chain is tRNA/tmRNA (uracil-C(5))-methyltransferase, found in Escherichia coli O17:K52:H18 (strain UMN026 / ExPEC).